The following is a 238-amino-acid chain: Calmodulin-binding protein 25 (238 aa).

Over residues 68 to 78 (STNTLSSTVSG) the composition is skewed to polar residues. The disordered stretch occupies residues 68–87 (STNTLSSTVSGASDPEIIGG). A Bipartite nuclear localization signal motif is present at residues 92-108 (KRNCLLTDGKAAKRRAR). Residues 125–134 (FRQMVQQVTG) carry the VQ motif. The disordered stretch occupies residues 201–220 (SSVGLPSGKPSATADPGGSA).

In terms of assembly, interacts with calmodulin (CaM). Interacts with WRKY25 and WRKY51. Expressed in leaves, flowers and siliques.

It is found in the nucleus. Its function is as follows. Calmodulin-binding protein that functions as a negative regulator of osmotic stress tolerance. The chain is Calmodulin-binding protein 25 from Arabidopsis thaliana (Mouse-ear cress).